Consider the following 30-residue polypeptide: Conotoxin Bt12.1 (30 aa).

Contains 3 disulfide bonds. Expressed by the venom duct.

The protein localises to the secreted. The chain is Conotoxin Bt12.1 from Conus betulinus (Beech cone).